The primary structure comprises 300 residues: Estradiol 17-beta-dehydrogenase 11 (300 aa).

The signal sequence occupies residues 1–19 (MKFLLDILLLLPLLIVCSL). 40–64 (LITGAGHGIGRLTAYEFAKLKSKLV) serves as a coordination point for NADP(+). S172 is a substrate binding site. Y185 functions as the Proton acceptor in the catalytic mechanism.

It belongs to the short-chain dehydrogenases/reductases (SDR) family. 17-beta-HSD 3 subfamily. Present at high level in steroidogenic cells such as syncytiotrophoblasts, sebaceous gland, Leydig cells, and granulosa cells of the dominant follicle and corpus luteum. In lung, it is detected in the ciliated epithelium and in acini of adult trachea, in bronchioles, but not in alveoli. In the eye, it is detected in the nonpigmented epithelium of the ciliary body and, at lower level, in the inner nuclear layer of the retina (at protein level). Widely expressed. Highly expressed in retina, pancreas, kidney, liver, lung, adrenal, small intestine, ovary and heart.

Its subcellular location is the endoplasmic reticulum. The protein localises to the lipid droplet. It carries out the reaction 17beta-estradiol + NAD(+) = estrone + NADH + H(+). The enzyme catalyses 17beta-estradiol + NADP(+) = estrone + NADPH + H(+). In terms of biological role, can convert androstan-3-alpha,17-beta-diol (3-alpha-diol) to androsterone in vitro, suggesting that it may participate in androgen metabolism during steroidogenesis. May act by metabolizing compounds that stimulate steroid synthesis and/or by generating metabolites that inhibit it. Has no activity toward DHEA (dehydroepiandrosterone), or A-dione (4-androste-3,17-dione), and only a slight activity toward testosterone to A-dione. Tumor-associated antigen in cutaneous T-cell lymphoma. The chain is Estradiol 17-beta-dehydrogenase 11 (HSD17B11) from Homo sapiens (Human).